The following is a 162-amino-acid chain: Endoribonuclease YbeY (162 aa).

Residues His-117, His-121, and His-127 each coordinate Zn(2+).

This sequence belongs to the endoribonuclease YbeY family. Requires Zn(2+) as cofactor.

The protein resides in the cytoplasm. Functionally, single strand-specific metallo-endoribonuclease involved in late-stage 70S ribosome quality control and in maturation of the 3' terminus of the 16S rRNA. The polypeptide is Endoribonuclease YbeY (Francisella tularensis subsp. holarctica (strain OSU18)).